We begin with the raw amino-acid sequence, 418 residues long: Serine protease inhibitor A3K (418 aa).

The first 21 residues, 1–21 (MAFIVAMGMILMAGICPAVLC), serve as a signal peptide directing secretion. N-linked (GlcNAc...) asparagine glycans are attached at residues Asn-39, Asn-105, Asn-185, and Asn-270. Residues 369–394 (GTEAAAATGVIGGIRKAILPAVHFNR) are RCL.

This sequence belongs to the serpin family. In terms of tissue distribution, expressed in liver and secreted in plasma.

The protein resides in the secreted. Its function is as follows. Contrapsin inhibits trypsin-like proteases. In Mus musculus (Mouse), this protein is Serine protease inhibitor A3K (Serpina3k).